Consider the following 238-residue polypeptide: Glyceraldehyde 3-phosphate phosphatase (238 aa).

This sequence belongs to the HAD-like hydrolase superfamily. Mg(2+) is required as a cofactor.

Functionally, catalyzes the dephosphorylation of D,L-glyceraldehyde 3-phosphate in vitro. The sequence is that of Glyceraldehyde 3-phosphate phosphatase from Pyrococcus abyssi (strain GE5 / Orsay).